Reading from the N-terminus, the 194-residue chain is Cupin-domain-containing oxidoreductase virC (194 aa).

The region spanning 106 to 175 is the Cupin type-2 domain; sequence IDFAPNVISP…GTLPGRMMWV (70 aa).

Belongs to the virC family.

It participates in secondary metabolite biosynthesis. Its function is as follows. Cupin-domain-containing oxidoreductase; part of the gene cluster that mediates the biosynthesis of virensols and trichoxide, fungal natural products that contain or are derived from a salicylaldehyde core. The pathway begins with the synthesis of the reduced chain in virensol C by the highly reducing polyketide synthase virA via condensation of one acetate and 8 malonate units. VirA has interesting programming rules since the first 2 ketides are fully reduced, the 3 following ketides undergo beta-dehydration, and the last 3 ketides are only reduced to beta-hydroxys to yield the trihydroxy portion. The production of aldehyde virensol C by virA alone is surprising, since virA does not contain a reductase (R) domain that is typically associated with reductive product release in HRPKS. The cupin-domain enzyme virC is involved in enhancing virA product turnover. The short-chain dehydrogenase virB then oxidizes the C-7 alcohol of virensol C to a ketone, yielding virensol D. Virensol D is further transformed to salicylaldehyde 5-deoxyaurocitrin by the short-chain dehydrogenase virD. VirD catalyzes the dehydrogenation of C-3 to form the beta-ketone aldehyde, which is followed by the generation of the nucleophilic C-2 that is required for the intramolecular aldol condensation between C-2 and C-7, itself followed by dehydration and aromatization which leads to salicylaldehyde 5-deoxyaurocitrin. While the dehydrogenation of virensol D is definitely catalyzed by virD, the aldol condensation and dehydration may be uncatalyzed or assisted by virD. The short chain dehydrogenase virG then converts salicylaldehyde 5-deoxyaurocitrin into virensol B which is further hydroxylated by the cytochrome P450 monooxygenase virE to yield the hydroquinone virensol A. VirI then may oxidize virensol A to form the quinone, while virH performs the epoxidation. Finally, the two remaining short-chain dehydrogenases, virK and virL, are probably responsible for reducing the ketones to the corresponding alcohols to furnish the epoxycyclohexanol structure in trichoxide. The chain is Cupin-domain-containing oxidoreductase virC from Hypocrea virens (strain Gv29-8 / FGSC 10586) (Gliocladium virens).